A 118-amino-acid chain; its full sequence is Ribonuclease P protein component (118 aa).

The protein belongs to the RnpA family. As to quaternary structure, consists of a catalytic RNA component (M1 or rnpB) and a protein subunit.

The catalysed reaction is Endonucleolytic cleavage of RNA, removing 5'-extranucleotides from tRNA precursor.. Functionally, RNaseP catalyzes the removal of the 5'-leader sequence from pre-tRNA to produce the mature 5'-terminus. It can also cleave other RNA substrates such as 4.5S RNA. The protein component plays an auxiliary but essential role in vivo by binding to the 5'-leader sequence and broadening the substrate specificity of the ribozyme. In Photobacterium profundum (strain SS9), this protein is Ribonuclease P protein component.